An 81-amino-acid chain; its full sequence is Photosystem I iron-sulfur center (81 aa).

2 consecutive 4Fe-4S ferredoxin-type domains span residues 2-31 (SHTVKIYDTCIGCTQCVRACPTDVLEMVPW) and 37-68 (GQIASSPRVEDCVGCKRCETACPTDFLSVRVY). [4Fe-4S] cluster-binding residues include C11, C14, C17, C21, C48, C51, C54, and C58.

In terms of assembly, the eukaryotic PSI reaction center is composed of at least 11 subunits. The cofactor is [4Fe-4S] cluster.

Its subcellular location is the plastid. It is found in the chloroplast thylakoid membrane. It catalyses the reaction reduced [plastocyanin] + hnu + oxidized [2Fe-2S]-[ferredoxin] = oxidized [plastocyanin] + reduced [2Fe-2S]-[ferredoxin]. In terms of biological role, apoprotein for the two 4Fe-4S centers FA and FB of photosystem I (PSI); essential for photochemical activity. FB is the terminal electron acceptor of PSI, donating electrons to ferredoxin. The C-terminus interacts with PsaA/B/D and helps assemble the protein into the PSI complex. Required for binding of PsaD and PsaE to PSI. PSI is a plastocyanin/cytochrome c6-ferredoxin oxidoreductase, converting photonic excitation into a charge separation, which transfers an electron from the donor P700 chlorophyll pair to the spectroscopically characterized acceptors A0, A1, FX, FA and FB in turn. The chain is Photosystem I iron-sulfur center from Thalassiosira pseudonana (Marine diatom).